A 284-amino-acid polypeptide reads, in one-letter code: D-tagatose-1,6-bisphosphate aldolase subunit GatY (284 aa).

Asp82 serves as the catalytic Proton donor. Positions 83 and 180 each coordinate Zn(2+). Gly181 serves as a coordination point for dihydroxyacetone phosphate. Position 208 (His208) interacts with Zn(2+). Residues 209-211 (GAS) and 230-233 (NVAT) contribute to the dihydroxyacetone phosphate site.

It belongs to the class II fructose-bisphosphate aldolase family. TagBP aldolase GatY subfamily. Forms a complex with GatZ. Zn(2+) is required as a cofactor.

It catalyses the reaction D-tagatofuranose 1,6-bisphosphate = D-glyceraldehyde 3-phosphate + dihydroxyacetone phosphate. It functions in the pathway carbohydrate metabolism; D-tagatose 6-phosphate degradation; D-glyceraldehyde 3-phosphate and glycerone phosphate from D-tagatose 6-phosphate: step 2/2. Its function is as follows. Catalytic subunit of the tagatose-1,6-bisphosphate aldolase GatYZ, which catalyzes the reversible aldol condensation of dihydroxyacetone phosphate (DHAP or glycerone-phosphate) with glyceraldehyde 3-phosphate (G3P) to produce tagatose 1,6-bisphosphate (TBP). Requires GatZ subunit for full activity and stability. Is involved in the catabolism of galactitol. The sequence is that of D-tagatose-1,6-bisphosphate aldolase subunit GatY from Salmonella choleraesuis (strain SC-B67).